Here is a 64-residue protein sequence, read N- to C-terminus: Cytochrome c oxidase subunit 2 (64 aa).

Over 1–14 (MAHPSQLGFQDAAS) the chain is Mitochondrial intermembrane. Residues 15 to 45 (PMMEELLHFHDHALMVVFLISTFVLYIILTM) traverse the membrane as a helical segment. The Mitochondrial matrix segment spans residues 46 to 64 (LTTKLTDKLILESHEIEII).

It belongs to the cytochrome c oxidase subunit 2 family. Component of the cytochrome c oxidase (complex IV, CIV), a multisubunit enzyme composed of 14 subunits. The complex is composed of a catalytic core of 3 subunits MT-CO1, MT-CO2 and MT-CO3, encoded in the mitochondrial DNA, and 11 supernumerary subunits COX4I, COX5A, COX5B, COX6A, COX6B, COX6C, COX7A, COX7B, COX7C, COX8 and NDUFA4, which are encoded in the nuclear genome. The complex exists as a monomer or a dimer and forms supercomplexes (SCs) in the inner mitochondrial membrane with NADH-ubiquinone oxidoreductase (complex I, CI) and ubiquinol-cytochrome c oxidoreductase (cytochrome b-c1 complex, complex III, CIII), resulting in different assemblies (supercomplex SCI(1)III(2)IV(1) and megacomplex MCI(2)III(2)IV(2)). Found in a complex with TMEM177, COA6, COX18, COX20, SCO1 and SCO2. Interacts with TMEM177 in a COX20-dependent manner. Interacts with COX20. Interacts with COX16. The cofactor is Cu cation.

Its subcellular location is the mitochondrion inner membrane. It carries out the reaction 4 Fe(II)-[cytochrome c] + O2 + 8 H(+)(in) = 4 Fe(III)-[cytochrome c] + 2 H2O + 4 H(+)(out). In terms of biological role, component of the cytochrome c oxidase, the last enzyme in the mitochondrial electron transport chain which drives oxidative phosphorylation. The respiratory chain contains 3 multisubunit complexes succinate dehydrogenase (complex II, CII), ubiquinol-cytochrome c oxidoreductase (cytochrome b-c1 complex, complex III, CIII) and cytochrome c oxidase (complex IV, CIV), that cooperate to transfer electrons derived from NADH and succinate to molecular oxygen, creating an electrochemical gradient over the inner membrane that drives transmembrane transport and the ATP synthase. Cytochrome c oxidase is the component of the respiratory chain that catalyzes the reduction of oxygen to water. Electrons originating from reduced cytochrome c in the intermembrane space (IMS) are transferred via the dinuclear copper A center (CU(A)) of subunit 2 and heme A of subunit 1 to the active site in subunit 1, a binuclear center (BNC) formed by heme A3 and copper B (CU(B)). The BNC reduces molecular oxygen to 2 water molecules using 4 electrons from cytochrome c in the IMS and 4 protons from the mitochondrial matrix. This Geophagus steindachneri (Red hump earth eater) protein is Cytochrome c oxidase subunit 2 (mt-co2).